Here is a 149-residue protein sequence, read N- to C-terminus: Calmodulin (149 aa).

At A2 the chain carries N-acetylalanine. 4 consecutive EF-hand domains span residues E8–N43, P44–D79, D81–K116, and L117–K149. The Ca(2+) site is built by D21, D23, D25, T27, E32, D57, D59, N61, T63, E68, D94, D96, N98, and E105. At K116 the chain carries N6,N6,N6-trimethyllysine. D130, D132, D134, H136, and E141 together coordinate Ca(2+).

The protein belongs to the calmodulin family.

Functionally, calmodulin mediates the control of a large number of enzymes, ion channels and other proteins by Ca(2+). Among the enzymes to be stimulated by the calmodulin-Ca(2+) complex are a number of protein kinases and phosphatases. The polypeptide is Calmodulin (Stylonychia lemnae (Ciliate)).